The primary structure comprises 520 residues: MGKKSKSQKEAPATESAGSLPFLGGNVSVDPSLASLFEQSAGPVKVPEVPRLGAAPKTKITDVEKDEEESSSAGNDSASEDQFMEDAPESPDAAEEAVQAVPEPPSRKRKRAAGEDLEESYMRRLAKEEQKEQKKRRAERSSSLEEESEDGEKESPQSEDGESEDEGADIPKHEALAGAANDDDELSKSNRTVFLGNVSTKAITSKSAKKELMKHLSSFLSTLPESTGPHKIDSIRFRSTAFASGGKIPKRAAFAKQEIHDDTTPSTNAYAVYSTAQAAKKAPAALNGTVVLDRHLRVDNVAHPAKVDHKRCVFVGNLDFIDNETGTEEGEKKKKNRPPADVEEGLWRTFNAHTKASQSGPAGRGNVESVRVVRDRSTRVGKGFAYVQFYDQNCVEEALLLNDKRFPPLLPRKLRVVRAKKVAKKSVETTGAPKGSDRTLQGRAGKLLGRSSEARLKAAAKKSISQSSLVFEGNRATADGSSRIRVRTKSRGSKAKKDSRSKKRAAAYKAAGGKKAKIGK.

2 disordered regions span residues Met1 to Val29 and Ala41 to Glu185. Over residues Ala78–Glu95 the composition is skewed to acidic residues. The segment covering Ser120–Glu132 has biased composition (basic and acidic residues). A compositionally biased stretch (acidic residues) spans Leu144 to Ala168. 2 RRM domains span residues Arg191 to His303 and Arg311 to Lys421. Residues Glu472–Lys520 are disordered. The segment covering Ile484–Lys520 has biased composition (basic residues).

It belongs to the RRM RBM34 family.

Its subcellular location is the nucleus. The protein resides in the nucleolus. Its function is as follows. Involved in pre-25S rRNA processing. This is Nucleolar protein 12 (nop12) from Emericella nidulans (strain FGSC A4 / ATCC 38163 / CBS 112.46 / NRRL 194 / M139) (Aspergillus nidulans).